A 276-amino-acid chain; its full sequence is Malonyl-[acyl-carrier protein] O-methyltransferase (276 aa).

It belongs to the methyltransferase superfamily.

It carries out the reaction malonyl-[ACP] + S-adenosyl-L-methionine = malonyl-[ACP] methyl ester + S-adenosyl-L-homocysteine. It functions in the pathway cofactor biosynthesis; biotin biosynthesis. In terms of biological role, converts the free carboxyl group of a malonyl-thioester to its methyl ester by transfer of a methyl group from S-adenosyl-L-methionine (SAM). It allows to synthesize pimeloyl-ACP via the fatty acid synthetic pathway. The protein is Malonyl-[acyl-carrier protein] O-methyltransferase of Paenibacillus sp. (strain JDR-2).